The primary structure comprises 269 residues: Hydroxyethylthiazole kinase (269 aa).

Position 41 (Met-41) interacts with substrate. ATP contacts are provided by Arg-117 and Ser-165. Gly-192 contributes to the substrate binding site.

It belongs to the Thz kinase family. Mg(2+) is required as a cofactor.

The enzyme catalyses 5-(2-hydroxyethyl)-4-methylthiazole + ATP = 4-methyl-5-(2-phosphooxyethyl)-thiazole + ADP + H(+). It participates in cofactor biosynthesis; thiamine diphosphate biosynthesis; 4-methyl-5-(2-phosphoethyl)-thiazole from 5-(2-hydroxyethyl)-4-methylthiazole: step 1/1. Catalyzes the phosphorylation of the hydroxyl group of 4-methyl-5-beta-hydroxyethylthiazole (THZ). The polypeptide is Hydroxyethylthiazole kinase (Actinobacillus succinogenes (strain ATCC 55618 / DSM 22257 / CCUG 43843 / 130Z)).